We begin with the raw amino-acid sequence, 631 residues long: ESX-3 secretion system protein EccA3 (631 aa).

385–392 contributes to the ATP binding site; that stretch reads GPPGTGKT.

This sequence belongs to the CbxX/CfxQ family. In terms of assembly, part of the ESX-3 / type VII secretion system (T7SS), which is composed of cytosolic and membrane components.

The protein localises to the cytoplasm. In terms of biological role, part of the ESX-3 specialized secretion system, which is important for iron and zinc uptake or homeostasis. EccA3 exhibits ATPase activity and may provide energy for the export of ESX-3 substrates. This chain is ESX-3 secretion system protein EccA3, found in Mycobacterium tuberculosis (strain CDC 1551 / Oshkosh).